The primary structure comprises 743 residues: Glycerol dehydrogenase large subunit (743 aa).

A signal peptide spans Met1–Ala24. Low complexity predominate over residues Ala27–Gly41. Disordered stretches follow at residues Ala27–Asp115 and Ile445–Met474.

The protein belongs to the bacterial PQQ dehydrogenase family. Requires pyrroloquinoline quinone as cofactor.

The protein resides in the secreted. The enzyme catalyses glycerol + A = dihydroxyacetone + AH2. Catalyzes the oxidation of glycerol to glycerone. Also acts, more slowly, on a number of other polyols including D-sorbitol, D-arabinitol, D-mannitol, meso-erythritol, adonitol and propylene glycol. The polypeptide is Glycerol dehydrogenase large subunit (sldA) (Gluconobacter oxydans (strain 621H) (Gluconobacter suboxydans)).